The chain runs to 231 residues: Eukaryotic translation initiation factor 4E allele Eva1 (231 aa).

A compositionally biased stretch (basic and acidic residues) spans 1–20 (MAAAEMERTTSFDAAEKLKA). The interval 1 to 34 (MAAAEMERTTSFDAAEKLKAADAGGGEVDDELEE) is disordered. EIF4G-binding regions lie at residues 56–59 (HPLE) and 66–102 (FDNP…NNIH). Residues 74-79 (RQIDWG), lysine 106, and 124-125 (WE) contribute to the mRNA site. A disulfide bond links cysteine 129 and cysteine 167. Residues 150–159 (YTLLAMIGHQ) form an EIF4G-binding region. MRNA contacts are provided by residues 174 to 179 (RVKGEK) and 219 to 223 (KRLDR).

Belongs to the eukaryotic initiation factor 4E family. As to quaternary structure, EIF4F is a multi-subunit complex, the composition of which varies with external and internal environmental conditions. It is composed of at least EIF4A, EIF4E and EIF4G. EIF4E is also known to interact with other partners. In higher plants two isoforms of EIF4F have been identified, named isoform EIF4F and isoform EIF(iso)4F. Isoform EIF4F has subunits p220 and p26, whereas isoform EIF(iso)4F has subunits p82 and p28. In terms of assembly, (Microbial infection) Interacts with potyvirus viral genome-linked protein (VPg); this interaction is possible in susceptible hosts but impaired in resistant plants. According to the redox status, the Cys-129-Cys-167 disulfide bridge may have a role in regulating protein function by affecting its ability to bind capped mRNA.

Its subcellular location is the nucleus. The protein localises to the cytoplasm. In terms of biological role, component of the protein complex eIF4F, which is involved in the recognition of the mRNA cap, ATP-dependent unwinding of 5'-terminal secondary structure and recruitment of mRNA to the ribosome. Recognizes and binds the 7-methylguanosine-containing mRNA cap during an early step in the initiation of protein synthesis and facilitates ribosome binding by inducing the unwinding of the mRNAs secondary structures. Key component of recessive resistance to potyviruses. Functionally, (Microbial infection) Susceptibility host factor required for viral infection (e.g. Potato virus Y (PVY)) by recruiting viral RNAs to the host ribosomal complex via an interaction with viral genome-linked protein (VPg). Displayed sequence is the allele Eva1 that confers resistance to potato virus Y (PVY) by failing to interact with the viral VPg protein. The sequence is that of Eukaryotic translation initiation factor 4E allele Eva1 from Solanum etuberosum (Wild potato).